A 341-amino-acid chain; its full sequence is Protein-glutamate methylesterase/protein-glutamine glutaminase 2 (341 aa).

The Response regulatory domain maps to 11-126 (RVLVADDSEL…DLGEYGRLIR (116 aa)). Asp-62 is modified (4-aspartylphosphate). The region spanning 152–341 (PARAARVEVV…IPRALRELTR (190 aa)) is the CheB-type methylesterase domain. Residues Ser-166, His-193, and Asp-285 contribute to the active site.

This sequence belongs to the CheB family. In terms of processing, phosphorylated by CheA. Phosphorylation of the N-terminal regulatory domain activates the methylesterase activity.

It localises to the cytoplasm. The catalysed reaction is [protein]-L-glutamate 5-O-methyl ester + H2O = L-glutamyl-[protein] + methanol + H(+). It catalyses the reaction L-glutaminyl-[protein] + H2O = L-glutamyl-[protein] + NH4(+). Its function is as follows. Involved in chemotaxis. Part of a chemotaxis signal transduction system that modulates chemotaxis in response to various stimuli. Catalyzes the demethylation of specific methylglutamate residues introduced into the chemoreceptors (methyl-accepting chemotaxis proteins or MCP) by CheR. Also mediates the irreversible deamidation of specific glutamine residues to glutamic acid. The sequence is that of Protein-glutamate methylesterase/protein-glutamine glutaminase 2 from Anaeromyxobacter dehalogenans (strain 2CP-C).